A 223-amino-acid polypeptide reads, in one-letter code: MTQDQLKQAVAQAAVDHILPKLNDRSIVGVGTGSTANFFIDLLAKHKGFFDGAVASSEATAERLKQHGIPVYDLNSVSELEFYVDGADEANKHLELIKGGGAALTREKIVAAVAKTFICIADGSKLVEQLGAFPLPVEVIPMARSHVARELVKLGGDPVYRDGVVTDNGNVILDVHNLMIGFAPELEGKINDIVGVVSNGLFAMRPADLLLLGTQDGVQTLTR.

Residues 32–35 (TGST), 85–88 (DGAD), and 98–101 (KGGG) each bind substrate. The active-site Proton acceptor is the glutamate 107. Lysine 125 is a binding site for substrate.

It belongs to the ribose 5-phosphate isomerase family. Homodimer.

It carries out the reaction aldehydo-D-ribose 5-phosphate = D-ribulose 5-phosphate. Its pathway is carbohydrate degradation; pentose phosphate pathway; D-ribose 5-phosphate from D-ribulose 5-phosphate (non-oxidative stage): step 1/1. In terms of biological role, catalyzes the reversible conversion of ribose-5-phosphate to ribulose 5-phosphate. The protein is Ribose-5-phosphate isomerase A of Stutzerimonas stutzeri (strain A1501) (Pseudomonas stutzeri).